A 103-amino-acid polypeptide reads, in one-letter code: Phosphoribosyl-ATP pyrophosphatase (103 aa).

The disordered stretch occupies residues 84 to 103 (LQSREGKLSKTSDRKEINDL).

Belongs to the PRA-PH family.

The protein resides in the cytoplasm. It carries out the reaction 1-(5-phospho-beta-D-ribosyl)-ATP + H2O = 1-(5-phospho-beta-D-ribosyl)-5'-AMP + diphosphate + H(+). It functions in the pathway amino-acid biosynthesis; L-histidine biosynthesis; L-histidine from 5-phospho-alpha-D-ribose 1-diphosphate: step 2/9. The chain is Phosphoribosyl-ATP pyrophosphatase (hisE) from Listeria innocua serovar 6a (strain ATCC BAA-680 / CLIP 11262).